A 215-amino-acid chain; its full sequence is Cytochrome b6 (215 aa).

A helical membrane pass occupies residues 32-52; that stretch reads IFYCLGGITLTCFLVQVATGF. Residue Cys35 coordinates heme c. 2 residues coordinate heme b: His86 and His100. Transmembrane regions (helical) follow at residues 90–110, 116–136, and 186–206; these read ASMMVLMMILHVFRVYLTGGF, LTWVTGVVLGVLTATFGVTGY, and LHTFVLPLLTAVFMLMHFLMI. Heme b-binding residues include His187 and His202.

Belongs to the cytochrome b family. PetB subfamily. As to quaternary structure, the 4 large subunits of the cytochrome b6-f complex are cytochrome b6, subunit IV (17 kDa polypeptide, PetD), cytochrome f and the Rieske protein, while the 4 small subunits are PetG, PetL, PetM and PetN. The complex functions as a dimer. The cofactor is heme b. Heme c is required as a cofactor.

It localises to the plastid. The protein resides in the chloroplast thylakoid membrane. In terms of biological role, component of the cytochrome b6-f complex, which mediates electron transfer between photosystem II (PSII) and photosystem I (PSI), cyclic electron flow around PSI, and state transitions. The sequence is that of Cytochrome b6 from Pisum sativum (Garden pea).